We begin with the raw amino-acid sequence, 171 residues long: Large ribosomal subunit protein bL17 (171 aa).

The segment covering 140-152 (KREIQTKAREEKR) has biased composition (basic and acidic residues). The segment at 140 to 171 (KREIQTKAREEKRATRKSNSAPVSKETTSKKK) is disordered. Residues 156–165 (KSNSAPVSKE) are compositionally biased toward polar residues.

It belongs to the bacterial ribosomal protein bL17 family. As to quaternary structure, part of the 50S ribosomal subunit. Contacts protein L32.

This is Large ribosomal subunit protein bL17 from Leptospira interrogans serogroup Icterohaemorrhagiae serovar copenhageni (strain Fiocruz L1-130).